A 547-amino-acid polypeptide reads, in one-letter code: Chaperonin GroEL 3 (547 aa).

Residues T30–P33, K51, D87–T91, G415, and D496 contribute to the ATP site.

The protein belongs to the chaperonin (HSP60) family. In terms of assembly, forms a cylinder of 14 subunits composed of two heptameric rings stacked back-to-back. Interacts with the co-chaperonin GroES.

It localises to the cytoplasm. The catalysed reaction is ATP + H2O + a folded polypeptide = ADP + phosphate + an unfolded polypeptide.. Functionally, together with its co-chaperonin GroES, plays an essential role in assisting protein folding. The GroEL-GroES system forms a nano-cage that allows encapsulation of the non-native substrate proteins and provides a physical environment optimized to promote and accelerate protein folding. The sequence is that of Chaperonin GroEL 3 from Bradyrhizobium sp. (strain ORS 278).